We begin with the raw amino-acid sequence, 228 residues long: Urease accessory protein UreF 1 (228 aa).

This sequence belongs to the UreF family. UreD, UreF and UreG form a complex that acts as a GTP-hydrolysis-dependent molecular chaperone, activating the urease apoprotein by helping to assemble the nickel containing metallocenter of UreC. The UreE protein probably delivers the nickel.

Its subcellular location is the cytoplasm. Its function is as follows. Required for maturation of urease via the functional incorporation of the urease nickel metallocenter. The sequence is that of Urease accessory protein UreF 1 from Brucella anthropi (strain ATCC 49188 / DSM 6882 / CCUG 24695 / JCM 21032 / LMG 3331 / NBRC 15819 / NCTC 12168 / Alc 37) (Ochrobactrum anthropi).